We begin with the raw amino-acid sequence, 508 residues long: T-complex protein 1 subunit beta (508 aa).

This sequence belongs to the TCP-1 chaperonin family. In terms of assembly, component of the T-complex protein 1 (TCP1) complex.

Its subcellular location is the cytoplasm. Functionally, molecular chaperone; assists the folding of proteins upon ATP hydrolysis. This is T-complex protein 1 subunit beta (CCT2) from Encephalitozoon cuniculi (strain GB-M1) (Microsporidian parasite).